Here is a 76-residue protein sequence, read N- to C-terminus: ATP synthase subunit 9, mitochondrial (76 aa).

2 consecutive transmembrane segments (helical) span residues 14-34 and 52-72; these read IATL…VALI and ILGF…SFLL.

Belongs to the ATPase C chain family. F-type ATPases have 2 components, CF(1) - the catalytic core - and CF(0) - the membrane proton channel. CF(1) has five subunits: alpha(3), beta(3), gamma(1), delta(1), epsilon(1). CF(0) has three main subunits: a, b and c.

It localises to the mitochondrion membrane. In terms of biological role, mitochondrial membrane ATP synthase (F(1)F(0) ATP synthase or Complex V) produces ATP from ADP in the presence of a proton gradient across the membrane which is generated by electron transport complexes of the respiratory chain. F-type ATPases consist of two structural domains, F(1) - containing the extramembraneous catalytic core and F(0) - containing the membrane proton channel, linked together by a central stalk and a peripheral stalk. During catalysis, ATP synthesis in the catalytic domain of F(1) is coupled via a rotary mechanism of the central stalk subunits to proton translocation. Part of the complex F(0) domain. A homomeric c-ring of probably 10 subunits is part of the complex rotary element. The sequence is that of ATP synthase subunit 9, mitochondrial (ATP9) from Candida albicans (strain SC5314 / ATCC MYA-2876) (Yeast).